A 512-amino-acid polypeptide reads, in one-letter code: Phosphoenolpyruvate carboxylase (512 aa).

It belongs to the PEPCase type 2 family. Homotetramer. The cofactor is Mg(2+).

It catalyses the reaction oxaloacetate + phosphate = phosphoenolpyruvate + hydrogencarbonate. Functionally, catalyzes the irreversible beta-carboxylation of phosphoenolpyruvate (PEP) to form oxaloacetate (OAA), a four-carbon dicarboxylic acid source for the tricarboxylic acid cycle. The protein is Phosphoenolpyruvate carboxylase of Caldivirga maquilingensis (strain ATCC 700844 / DSM 13496 / JCM 10307 / IC-167).